The following is a 306-amino-acid chain: tRNA pseudouridine synthase B (306 aa).

The Nucleophile role is filled by D43.

Belongs to the pseudouridine synthase TruB family. Type 1 subfamily.

The enzyme catalyses uridine(55) in tRNA = pseudouridine(55) in tRNA. In terms of biological role, responsible for synthesis of pseudouridine from uracil-55 in the psi GC loop of transfer RNAs. This chain is tRNA pseudouridine synthase B, found in Anaplasma marginale (strain St. Maries).